Here is a 347-residue protein sequence, read N- to C-terminus: Inosamine-phosphate amidinotransferase 1 (347 aa).

Active-site residues include Asp179 and His227. The active-site Amidino-cysteine intermediate is the Cys332.

It belongs to the amidinotransferase family. Homodimer.

The catalysed reaction is 1-amino-1-deoxy-scyllo-inositol 4-phosphate + L-arginine = 1-guanidino-1-deoxy-scyllo-inositol 4-phosphate + L-ornithine. The protein operates within antibiotic biosynthesis; streptomycin biosynthesis. Its function is as follows. Catalyzes two non-consecutive transamidination reactions. It converts scyllo-inosamine 4-phosphate into N-amidino-scyllo-inosamine 4-phosphate and N1-amidinostreptamine 6-phosphate into streptidine 6-phosphate. This chain is Inosamine-phosphate amidinotransferase 1 (strB1), found in Streptomyces griseus.